The following is a 179-amino-acid chain: Protein HoxT (179 aa).

The polypeptide is Protein HoxT (hoxT) (Cupriavidus necator (strain ATCC 17699 / DSM 428 / KCTC 22496 / NCIMB 10442 / H16 / Stanier 337) (Ralstonia eutropha)).